The sequence spans 209 residues: Small ribosomal subunit protein uS4 (209 aa).

Positions 23–46 are disordered; it reads SRNPLLKKPHPPGQHGMQRKKKSD. The 64-residue stretch at 93-156 folds into the S4 RNA-binding domain; sequence CRLDNMVYRM…RKLQSVQESL (64 aa).

This sequence belongs to the universal ribosomal protein uS4 family. As to quaternary structure, part of the 30S ribosomal subunit. Contacts protein S5. The interaction surface between S4 and S5 is involved in control of translational fidelity.

Functionally, one of the primary rRNA binding proteins, it binds directly to 16S rRNA where it nucleates assembly of the body of the 30S subunit. With S5 and S12 plays an important role in translational accuracy. The sequence is that of Small ribosomal subunit protein uS4 from Chlamydia caviae (strain ATCC VR-813 / DSM 19441 / 03DC25 / GPIC) (Chlamydophila caviae).